We begin with the raw amino-acid sequence, 1911 residues long: Protein TIC 214 (1911 aa).

Helical transmembrane passes span 41-61, 81-103, 108-128, 147-167, 195-215, and 238-258; these read IINS…FSIG, ISAT…YAPL, GKPH…FFWN, FNIQ…HFIL, IGWL…LFWI, and IFSI…PLPI. Disordered regions lie at residues 265-299, 798-817, and 1599-1647; these read ETSE…STEE, DSEE…KEEN, and NQNQ…RKKK. A compositionally biased stretch (acidic residues) spans 268–297; sequence ETEESEENEEESDIEITSEPKEQDEEEGST. Basic and acidic residues-rich tracts occupy residues 1603–1615 and 1623–1635; these read QEKK…RDLG and QKQK…EKNY.

The protein belongs to the TIC214 family. As to quaternary structure, part of the Tic complex.

It localises to the plastid. The protein resides in the chloroplast inner membrane. In terms of biological role, involved in protein precursor import into chloroplasts. May be part of an intermediate translocation complex acting as a protein-conducting channel at the inner envelope. In Lemna minor (Common duckweed), this protein is Protein TIC 214.